A 37-amino-acid chain; its full sequence is Protamine Z3 (37 aa).

A disordered region spans residues 1-37; sequence ARSRSRRSYGRGRRRGGRRRRRRRRRRRGGRRGRRSR.

Testis.

It localises to the nucleus. Its subcellular location is the chromosome. Protamines substitute for histones in the chromatin of sperm during the haploid phase of spermatogenesis. They compact sperm DNA into a highly condensed, stable and inactive complex. The polypeptide is Protamine Z3 (Scyliorhinus canicula (Small-spotted catshark)).